Reading from the N-terminus, the 682-residue chain is 1,4-alpha-glucan-branching enzyme (682 aa).

The (1,4-alpha-D-glucosyl)n site is built by W88 and K124. Catalysis depends on D342, which acts as the Nucleophile. E397 serves as the catalytic Proton donor.

Belongs to the glycosyl hydrolase 13 family. GlgB subfamily.

Its subcellular location is the cytoplasm. It carries out the reaction Transfers a segment of a (1-&gt;4)-alpha-D-glucan chain to a primary hydroxy group in a similar glucan chain.. The protein operates within glycan biosynthesis; glycogen biosynthesis. In terms of biological role, glycogen-branching enzyme participates in the glycogen biosynthetic process along with glycogenin and glycogen synthase. Generates alpha-1,6-glucosidic branches from alpha-1,4-linked glucose chains, to increase solubility of the glycogen polymer. The sequence is that of 1,4-alpha-glucan-branching enzyme from Cryptococcus neoformans var. grubii serotype A (strain H99 / ATCC 208821 / CBS 10515 / FGSC 9487) (Filobasidiella neoformans var. grubii).